Consider the following 145-residue polypeptide: Large ribosomal subunit protein uL16 (145 aa).

The protein belongs to the universal ribosomal protein uL16 family. Part of the 50S ribosomal subunit.

In terms of biological role, binds 23S rRNA and is also seen to make contacts with the A and possibly P site tRNAs. The chain is Large ribosomal subunit protein uL16 from Herpetosiphon aurantiacus (strain ATCC 23779 / DSM 785 / 114-95).